The chain runs to 437 residues: Enolase (437 aa).

H160 and E169 together coordinate substrate. The Proton donor role is filled by E212. 3 residues coordinate Mg(2+): D247, E296, and D321. Residues E296 and D321 each contribute to the substrate site. K346 functions as the Proton acceptor in the catalytic mechanism. Residues 373 to 376 (SHRS) and K397 each bind substrate.

The protein belongs to the enolase family. As to quaternary structure, homodimer. Mg(2+) serves as cofactor.

It localises to the cytoplasm. It catalyses the reaction (2R)-2-phosphoglycerate = phosphoenolpyruvate + H2O. It functions in the pathway carbohydrate degradation; glycolysis; pyruvate from D-glyceraldehyde 3-phosphate: step 4/5. In Eremothecium gossypii (strain ATCC 10895 / CBS 109.51 / FGSC 9923 / NRRL Y-1056) (Yeast), this protein is Enolase (ENO).